Here is a 210-residue protein sequence, read N- to C-terminus: Methylthioribulose-1-phosphate dehydratase (210 aa).

Residues H97 and H99 each coordinate Zn(2+).

Belongs to the aldolase class II family. MtnB subfamily. Homotetramer. Zn(2+) is required as a cofactor.

The enzyme catalyses 5-(methylsulfanyl)-D-ribulose 1-phosphate = 5-methylsulfanyl-2,3-dioxopentyl phosphate + H2O. It functions in the pathway amino-acid biosynthesis; L-methionine biosynthesis via salvage pathway; L-methionine from S-methyl-5-thio-alpha-D-ribose 1-phosphate: step 2/6. Functionally, catalyzes the dehydration of methylthioribulose-1-phosphate (MTRu-1-P) into 2,3-diketo-5-methylthiopentyl-1-phosphate (DK-MTP-1-P). The sequence is that of Methylthioribulose-1-phosphate dehydratase from Geobacillus kaustophilus (strain HTA426).